Reading from the N-terminus, the 446-residue chain is Nuclear envelope integral membrane protein 1 (446 aa).

A signal peptide spans 1 to 37; sequence MAGFMKYKSVSTTIETVRLKLILTAVLFLFPFSQTSG. N-linked (GlcNAc...) asparagine glycosylation is found at Asn62, Asn118, and Asn129. Helical transmembrane passes span 154 to 174, 181 to 201, 209 to 229, 239 to 259, and 269 to 289; these read IYLF…DVLS, YSAG…FIVY, PFYM…QLVF, HWHL…AVCY, and SINI…YAGI. The span at 410-431 shows a compositional bias: acidic residues; that stretch reads LFSTDEEDKEEEEDGWETEDDI. A disordered region spans residues 410–446; the sequence is LFSTDEEDKEEEEDGWETEDDIKPEVTSPRMNNTRGK. Asn441 is a glycosylation site (N-linked (GlcNAc...) asparagine).

The protein belongs to the NEMP family.

The protein localises to the nucleus inner membrane. Contributes to nuclear envelope stiffness in germ cells. Involved in male and female fertility. Essential for normal erythropoiesis. Required for efficient nuclear envelope opening and enucleation during the late stages of erythroblast maturation. This chain is Nuclear envelope integral membrane protein 1, found in Danio rerio (Zebrafish).